Consider the following 184-residue polypeptide: Orotate phosphoribosyltransferase (184 aa).

5-phospho-alpha-D-ribose 1-diphosphate-binding positions include Arg-99, Lys-100, Lys-103, His-105, and 125–133 (EDTTTTGNS). Orotate contacts are provided by Thr-129 and Arg-157.

Belongs to the purine/pyrimidine phosphoribosyltransferase family. PyrE subfamily. Homodimer. Requires Mg(2+) as cofactor.

It carries out the reaction orotidine 5'-phosphate + diphosphate = orotate + 5-phospho-alpha-D-ribose 1-diphosphate. Its pathway is pyrimidine metabolism; UMP biosynthesis via de novo pathway; UMP from orotate: step 1/2. Functionally, catalyzes the transfer of a ribosyl phosphate group from 5-phosphoribose 1-diphosphate to orotate, leading to the formation of orotidine monophosphate (OMP). The sequence is that of Orotate phosphoribosyltransferase from Corynebacterium glutamicum (strain ATCC 13032 / DSM 20300 / JCM 1318 / BCRC 11384 / CCUG 27702 / LMG 3730 / NBRC 12168 / NCIMB 10025 / NRRL B-2784 / 534).